The sequence spans 164 residues: Putative pre-16S rRNA nuclease (164 aa).

It belongs to the YqgF nuclease family.

It localises to the cytoplasm. Its function is as follows. Could be a nuclease involved in processing of the 5'-end of pre-16S rRNA. In Synechococcus sp. (strain CC9902), this protein is Putative pre-16S rRNA nuclease.